The primary structure comprises 262 residues: Shikimate dehydrogenase (NADP(+)) (262 aa).

Shikimate is bound by residues 15-17 and T62; that span reads SRS. The active-site Proton acceptor is the K66. E78 serves as a coordination point for NADP(+). Shikimate-binding residues include N87 and D102. NADP(+)-binding positions include 126-130, 150-155, and M214; these read GAGGA and NRTQQR. Y216 contacts shikimate. NADP(+) is bound at residue G236.

It belongs to the shikimate dehydrogenase family. In terms of assembly, homodimer.

The enzyme catalyses shikimate + NADP(+) = 3-dehydroshikimate + NADPH + H(+). It functions in the pathway metabolic intermediate biosynthesis; chorismate biosynthesis; chorismate from D-erythrose 4-phosphate and phosphoenolpyruvate: step 4/7. Its function is as follows. Involved in the biosynthesis of the chorismate, which leads to the biosynthesis of aromatic amino acids. Catalyzes the reversible NADPH linked reduction of 3-dehydroshikimate (DHSA) to yield shikimate (SA). The sequence is that of Shikimate dehydrogenase (NADP(+)) from Acinetobacter baylyi (strain ATCC 33305 / BD413 / ADP1).